Consider the following 130-residue polypeptide: Small ribosomal subunit protein uS9 (130 aa).

This sequence belongs to the universal ribosomal protein uS9 family.

The polypeptide is Small ribosomal subunit protein uS9 (Caldicellulosiruptor bescii (strain ATCC BAA-1888 / DSM 6725 / KCTC 15123 / Z-1320) (Anaerocellum thermophilum)).